Reading from the N-terminus, the 176-residue chain is Crossover junction endodeoxyribonuclease RuvC (176 aa).

Residues Asp-9, Glu-69, and Asp-141 contribute to the active site. Residues Asp-9, Glu-69, and Asp-141 each contribute to the Mg(2+) site.

The protein belongs to the RuvC family. Homodimer which binds Holliday junction (HJ) DNA. The HJ becomes 2-fold symmetrical on binding to RuvC with unstacked arms; it has a different conformation from HJ DNA in complex with RuvA. In the full resolvosome a probable DNA-RuvA(4)-RuvB(12)-RuvC(2) complex forms which resolves the HJ. Mg(2+) serves as cofactor.

It localises to the cytoplasm. The enzyme catalyses Endonucleolytic cleavage at a junction such as a reciprocal single-stranded crossover between two homologous DNA duplexes (Holliday junction).. In terms of biological role, the RuvA-RuvB-RuvC complex processes Holliday junction (HJ) DNA during genetic recombination and DNA repair. Endonuclease that resolves HJ intermediates. Cleaves cruciform DNA by making single-stranded nicks across the HJ at symmetrical positions within the homologous arms, yielding a 5'-phosphate and a 3'-hydroxyl group; requires a central core of homology in the junction. The consensus cleavage sequence is 5'-(A/T)TT(C/G)-3'. Cleavage occurs on the 3'-side of the TT dinucleotide at the point of strand exchange. HJ branch migration catalyzed by RuvA-RuvB allows RuvC to scan DNA until it finds its consensus sequence, where it cleaves and resolves the cruciform DNA. This chain is Crossover junction endodeoxyribonuclease RuvC, found in Chromobacterium violaceum (strain ATCC 12472 / DSM 30191 / JCM 1249 / CCUG 213 / NBRC 12614 / NCIMB 9131 / NCTC 9757 / MK).